A 269-amino-acid polypeptide reads, in one-letter code: Formamidopyrimidine-DNA glycosylase (269 aa).

P2 functions as the Schiff-base intermediate with DNA in the catalytic mechanism. E3 functions as the Proton donor in the catalytic mechanism. The active-site Proton donor; for beta-elimination activity is K57. 3 residues coordinate DNA: H90, R109, and K150. The FPG-type zinc finger occupies Q235–K269. R259 (proton donor; for delta-elimination activity) is an active-site residue.

This sequence belongs to the FPG family. As to quaternary structure, monomer. The cofactor is Zn(2+).

It carries out the reaction Hydrolysis of DNA containing ring-opened 7-methylguanine residues, releasing 2,6-diamino-4-hydroxy-5-(N-methyl)formamidopyrimidine.. The enzyme catalyses 2'-deoxyribonucleotide-(2'-deoxyribose 5'-phosphate)-2'-deoxyribonucleotide-DNA = a 3'-end 2'-deoxyribonucleotide-(2,3-dehydro-2,3-deoxyribose 5'-phosphate)-DNA + a 5'-end 5'-phospho-2'-deoxyribonucleoside-DNA + H(+). Involved in base excision repair of DNA damaged by oxidation or by mutagenic agents. Acts as a DNA glycosylase that recognizes and removes damaged bases. Has a preference for oxidized purines, such as 7,8-dihydro-8-oxoguanine (8-oxoG). Has AP (apurinic/apyrimidinic) lyase activity and introduces nicks in the DNA strand. Cleaves the DNA backbone by beta-delta elimination to generate a single-strand break at the site of the removed base with both 3'- and 5'-phosphates. The protein is Formamidopyrimidine-DNA glycosylase of Shigella dysenteriae serotype 1 (strain Sd197).